A 634-amino-acid chain; its full sequence is 1-deoxy-D-xylulose-5-phosphate synthase (634 aa).

Residues His-74 and 115–117 (AHS) contribute to the thiamine diphosphate site. Residue Asp-146 participates in Mg(2+) binding. Thiamine diphosphate-binding positions include 147-148 (GA), Asn-176, Tyr-283, and Glu-365. Asn-176 serves as a coordination point for Mg(2+).

Belongs to the transketolase family. DXPS subfamily. Homodimer. Mg(2+) is required as a cofactor. Thiamine diphosphate serves as cofactor.

It carries out the reaction D-glyceraldehyde 3-phosphate + pyruvate + H(+) = 1-deoxy-D-xylulose 5-phosphate + CO2. The protein operates within metabolic intermediate biosynthesis; 1-deoxy-D-xylulose 5-phosphate biosynthesis; 1-deoxy-D-xylulose 5-phosphate from D-glyceraldehyde 3-phosphate and pyruvate: step 1/1. Functionally, catalyzes the acyloin condensation reaction between C atoms 2 and 3 of pyruvate and glyceraldehyde 3-phosphate to yield 1-deoxy-D-xylulose-5-phosphate (DXP). In Burkholderia orbicola (strain MC0-3), this protein is 1-deoxy-D-xylulose-5-phosphate synthase.